The following is a 179-amino-acid chain: uncharacterized protein (179 aa).

Positions 26–39 (AAKLAAATTPTHTA) are enriched in low complexity. Positions 26 to 179 (AAKLAAATTP…RPRRNTLRHM (154 aa)) are disordered. Residues 150 to 165 (RQSVTQSTAARQTQPH) are compositionally biased toward polar residues. Residues 167–179 (GRPRPRRNTLRHM) show a composition bias toward basic residues.

This is an uncharacterized protein from Equus caballus (Horse).